Reading from the N-terminus, the 236-residue chain is 7-cyano-7-deazaguanine synthase 2 (236 aa).

Residue 11–21 (FSGGQDSATCL) participates in ATP binding. Cys-199, Cys-214, Cys-217, and Cys-220 together coordinate Zn(2+).

It belongs to the QueC family. Zn(2+) serves as cofactor.

The catalysed reaction is 7-carboxy-7-deazaguanine + NH4(+) + ATP = 7-cyano-7-deazaguanine + ADP + phosphate + H2O + H(+). It participates in purine metabolism; 7-cyano-7-deazaguanine biosynthesis. In terms of biological role, catalyzes the ATP-dependent conversion of 7-carboxy-7-deazaguanine (CDG) to 7-cyano-7-deazaguanine (preQ(0)). The polypeptide is 7-cyano-7-deazaguanine synthase 2 (Sphingopyxis alaskensis (strain DSM 13593 / LMG 18877 / RB2256) (Sphingomonas alaskensis)).